A 953-amino-acid polypeptide reads, in one-letter code: Coiled-coil domain-containing protein 14 (953 aa).

The span at 1–21 (MKRGIRRDPFRKRKLGGRAKK) shows a compositional bias: basic residues. Disordered regions lie at residues 1–22 (MKRGIRRDPFRKRKLGGRAKKV) and 52–72 (SGARPGQVLSSGRHTGPAKLT). Ser124 is subject to Phosphoserine. 2 disordered regions span residues 126–189 (SETA…TSDL) and 268–287 (PPCPPKVHSEVQTDGNSQFA). Basic residues predominate over residues 145 to 154 (YGSKKKRHEK). The segment covering 169 to 187 (DNKKQIPNEASARSERDTS) has biased composition (basic and acidic residues). A compositionally biased stretch (polar residues) spans 277 to 287 (EVQTDGNSQFA). Coiled-coil stretches lie at residues 383-413 (LATNEEKCAREQIREATSERKDLNIHVRDTK) and 483-618 (AMQP…AEKE). Phosphoserine is present on residues Ser670, Ser754, and Ser798.

As to quaternary structure, interacts with CEP63.

It is found in the cytoplasm. It localises to the cytoskeleton. The protein resides in the microtubule organizing center. Its subcellular location is the centrosome. The protein localises to the centriolar satellite. Its function is as follows. Negatively regulates centriole duplication. Negatively regulates CEP63 and CDK2 centrosomal localization. This Homo sapiens (Human) protein is Coiled-coil domain-containing protein 14 (CCDC14).